A 318-amino-acid chain; its full sequence is Probable RNA methyltransferase At5g51130 (318 aa).

2 disordered regions span residues 1-61 (MGRD…NQEV) and 146-184 (NSTK…DSAE). The span at 16-34 (RSNENEKSVEKVVANEEKV) shows a compositional bias: basic and acidic residues. Positions 37 to 52 (QQKQKQQQGQQGNCNQ) are enriched in low complexity. Residues 82–318 (DPRLKVLKKE…FDRQILAFQK (237 aa)) enclose the Bin3-type SAM domain.

The protein belongs to the methyltransferase superfamily.

Its function is as follows. Probable RNA methyltransferase. This chain is Probable RNA methyltransferase At5g51130, found in Arabidopsis thaliana (Mouse-ear cress).